Consider the following 307-residue polypeptide: tRNA pseudouridine synthase B (307 aa).

The active-site Nucleophile is D38.

Belongs to the pseudouridine synthase TruB family. Type 1 subfamily.

It carries out the reaction uridine(55) in tRNA = pseudouridine(55) in tRNA. In terms of biological role, responsible for synthesis of pseudouridine from uracil-55 in the psi GC loop of transfer RNAs. The chain is tRNA pseudouridine synthase B from Bacillus cereus (strain ATCC 14579 / DSM 31 / CCUG 7414 / JCM 2152 / NBRC 15305 / NCIMB 9373 / NCTC 2599 / NRRL B-3711).